A 155-amino-acid polypeptide reads, in one-letter code: Small ribosomal subunit protein uS7cz/uS7cy (155 aa).

The protein belongs to the universal ribosomal protein uS7 family. In terms of assembly, part of the 30S ribosomal subunit.

The protein resides in the plastid. It is found in the chloroplast. Its function is as follows. One of the primary rRNA binding proteins, it binds directly to 16S rRNA where it nucleates assembly of the head domain of the 30S subunit. In Ceratophyllum demersum (Rigid hornwort), this protein is Small ribosomal subunit protein uS7cz/uS7cy (rps7-A).